The following is a 101-amino-acid chain: Large ribosomal subunit protein uL24 (101 aa).

Belongs to the universal ribosomal protein uL24 family. Part of the 50S ribosomal subunit.

In terms of biological role, one of two assembly initiator proteins, it binds directly to the 5'-end of the 23S rRNA, where it nucleates assembly of the 50S subunit. Its function is as follows. One of the proteins that surrounds the polypeptide exit tunnel on the outside of the subunit. The chain is Large ribosomal subunit protein uL24 from Ruegeria sp. (strain TM1040) (Silicibacter sp.).